A 376-amino-acid polypeptide reads, in one-letter code: Carbamoyl phosphate synthase small chain (376 aa).

Residues 1 to 187 (MKALLALEDG…KEDGSFLWKQ (187 aa)) form a CPSase region. 3 residues coordinate L-glutamine: serine 45, glycine 239, and glycine 241. One can recognise a Glutamine amidotransferase type-1 domain in the interval 189-376 (KIPLIVYDYG…KEVVLLKLGC (188 aa)). Catalysis depends on cysteine 266, which acts as the Nucleophile. Residues leucine 267, glutamine 270, asparagine 308, glycine 310, and phenylalanine 311 each coordinate L-glutamine. Residues histidine 349 and glutamate 351 contribute to the active site.

The protein belongs to the CarA family. In terms of assembly, composed of two chains; the small (or glutamine) chain promotes the hydrolysis of glutamine to ammonia, which is used by the large (or ammonia) chain to synthesize carbamoyl phosphate. Tetramer of heterodimers (alpha,beta)4.

The enzyme catalyses hydrogencarbonate + L-glutamine + 2 ATP + H2O = carbamoyl phosphate + L-glutamate + 2 ADP + phosphate + 2 H(+). The catalysed reaction is L-glutamine + H2O = L-glutamate + NH4(+). The protein operates within amino-acid biosynthesis; L-arginine biosynthesis; carbamoyl phosphate from bicarbonate: step 1/1. It functions in the pathway pyrimidine metabolism; UMP biosynthesis via de novo pathway; (S)-dihydroorotate from bicarbonate: step 1/3. Its function is as follows. Small subunit of the glutamine-dependent carbamoyl phosphate synthetase (CPSase). CPSase catalyzes the formation of carbamoyl phosphate from the ammonia moiety of glutamine, carbonate, and phosphate donated by ATP, constituting the first step of 2 biosynthetic pathways, one leading to arginine and/or urea and the other to pyrimidine nucleotides. The small subunit (glutamine amidotransferase) binds and cleaves glutamine to supply the large subunit with the substrate ammonia. The chain is Carbamoyl phosphate synthase small chain from Lawsonia intracellularis (strain PHE/MN1-00).